Consider the following 306-residue polypeptide: Glutaminase (306 aa).

Substrate-binding residues include Ser64, Asn115, Glu159, Asn166, Tyr190, Tyr242, and Val260.

It belongs to the glutaminase family. In terms of assembly, homotetramer.

It catalyses the reaction L-glutamine + H2O = L-glutamate + NH4(+). This chain is Glutaminase, found in Vibrio vulnificus (strain YJ016).